A 413-amino-acid polypeptide reads, in one-letter code: Tyrosine--tRNA ligase (413 aa).

An L-tyrosine-binding site is contributed by Y34. Positions 39–48 (PTSHSLTVGH) match the 'HIGH' region motif. 2 residues coordinate L-tyrosine: Y164 and Q168. The short motif at 225 to 229 (KFGKS) is the 'KMSKS' region element. Position 228 (K228) interacts with ATP. The S4 RNA-binding domain occupies 347 to 413 (ILLVDALVQT…GKKNNALIVF (67 aa)).

Belongs to the class-I aminoacyl-tRNA synthetase family. TyrS type 1 subfamily. As to quaternary structure, homodimer.

The protein localises to the cytoplasm. The enzyme catalyses tRNA(Tyr) + L-tyrosine + ATP = L-tyrosyl-tRNA(Tyr) + AMP + diphosphate + H(+). In terms of biological role, catalyzes the attachment of tyrosine to tRNA(Tyr) in a two-step reaction: tyrosine is first activated by ATP to form Tyr-AMP and then transferred to the acceptor end of tRNA(Tyr). The sequence is that of Tyrosine--tRNA ligase from Aster yellows witches'-broom phytoplasma (strain AYWB).